A 146-amino-acid polypeptide reads, in one-letter code: Probable acetyltransferase HI_0677 (146 aa).

The 146-residue stretch at methionine 1–cysteine 146 folds into the N-acetyltransferase domain.

This chain is Probable acetyltransferase HI_0677, found in Haemophilus influenzae (strain ATCC 51907 / DSM 11121 / KW20 / Rd).